We begin with the raw amino-acid sequence, 968 residues long: RNA polymerase-associated protein RapA (968 aa).

The Helicase ATP-binding domain maps to 164–334 (DVGRRHAPRV…FARLRLLDPS (171 aa)). An ATP-binding site is contributed by 177–184 (DEVGLGKT). The DEAH box motif lies at 280–283 (DEAH). Residues 490-644 (RVEWLMGHLT…TCPTGRAIYD (155 aa)) enclose the Helicase C-terminal domain.

Belongs to the SNF2/RAD54 helicase family. RapA subfamily. Interacts with the RNAP. Has a higher affinity for the core RNAP than for the holoenzyme. Its ATPase activity is stimulated by binding to RNAP.

Transcription regulator that activates transcription by stimulating RNA polymerase (RNAP) recycling in case of stress conditions such as supercoiled DNA or high salt concentrations. Probably acts by releasing the RNAP, when it is trapped or immobilized on tightly supercoiled DNA. Does not activate transcription on linear DNA. Probably not involved in DNA repair. The chain is RNA polymerase-associated protein RapA from Citrobacter koseri (strain ATCC BAA-895 / CDC 4225-83 / SGSC4696).